A 775-amino-acid polypeptide reads, in one-letter code: Meiotic driver SPOK2 (775 aa).

Positions 4–69 (KDRIAQLLRE…RCERERLQLE (66 aa)) form a coiled coil. Disordered regions lie at residues 18–51 (KARE…REEE), 211–249 (QKDD…YICS), 442–525 (LSSA…AMAD), and 734–761 (PPPK…AQLF). The segment covering 444-457 (SAPSSQNTDISEYT) has biased composition (polar residues).

The protein localises to the cytoplasm. It localises to the nucleus. Functionally, promotes unequal transmission of alleles from the parental zygote to progeny spores by acting as poison/antidote system, leading to poisoning of progeny that do not inherit the allele. May possess DNA nuclease activity that leads to spore killing, and a kinase activity that confers resistance to the nuclease activity. This chain is Meiotic driver SPOK2, found in Podospora anserina (strain S / ATCC MYA-4624 / DSM 980 / FGSC 10383) (Pleurage anserina).